Consider the following 1507-residue polypeptide: Lhr helicase/ probable uracil glycosylase (1507 aa).

Residues 1-856 (MTTNGADPLG…ASLLFGYVGA (856 aa)) are lhr-Core. ATP is bound by residues phenylalanine 24, glutamine 31, lysine 54, and threonine 55. Residues 35–226 (WSAISEGNNT…FLSGQAPTTI (192 aa)) enclose the Helicase ATP-binding domain. Residues arginine 122, arginine 131, threonine 145, serine 148, and methionine 152 each coordinate ssDNA. Positions 170 and 171 each coordinate ATP. The short motif at 170-173 (DEVH) is the DEAH box element. Serine 253, tryptophan 255, and arginine 279 together coordinate ssDNA. The region spanning 257-451 (DVEERIVDLV…VLAQHTVAVA (195 aa)) is the Helicase C-terminal domain. ATP-binding residues include isoleucine 377, arginine 394, and histidine 397. Residues lysine 410, glutamine 518, arginine 519, isoleucine 528, tryptophan 597, aspartate 600, and arginine 777 each contribute to the ssDNA site. The interval 436–529 (PANPLDVLAQ…LAVTSGGAIP (94 aa)) is WH domain. The segment at 530-856 (DRGMFTVYLA…ASLLFGYVGA (327 aa)) is domain 4. The segment at 857-1507 (FMYEGDSPLA…SRTPRGLRLR (651 aa)) is CTD.

The protein belongs to the Lhr helicase family. As to quaternary structure, monomer. Homooligomerizes, possibly a homotetramer. Requires Ca(2+) as cofactor.

The catalysed reaction is Couples ATP hydrolysis with the unwinding of duplex DNA by translocating in the 3'-5' direction.. It carries out the reaction ATP + H2O = ADP + phosphate + H(+). It catalyses the reaction Hydrolyzes single-stranded DNA or mismatched double-stranded DNA and polynucleotides, releasing free uracil.. Functionally, a 3'-5' helicase involved in repair of at least 3 types of DNA cross-links, mitomycin C (MMC), cisplatin, and psoralen-UVA. Translocates 3'-to-5' on single-stranded (ss)DNA, unwinding any encountered duplex nucleic acid. A 3'-ssDNA loading strand of at least 15 nucleotides is required for helicase activity. An RNA:DNA hybrid with a 3'-ssDNA loading strand is an 8-fold better helicase substrate than 3'-tailed double-stranded (ds)DNA; substrates where the helicase loads on a 3'-ssRNA tail (DNA:RNA and RNA:RNA) are not unwound. Only (d)ATP is hydrolyzed by the protein, which has no ATPase activity in the absence of ssDNA or ssRNA. Arg-279 and Trp-597 are needed to couple ATP hydrolysis to mechanical work; a salt bridge between Arg-280 and Glu-550 closes a clamp around the ssDNA that is not large enough for dsDNA, while Ile-528 wedges between bases of the loading strand. In terms of biological role, excises uracil residues from ssDNA. Uracil residues in DNA can arise as a result of misincorporation of dUMP residues by DNA polymerase or due to deamination of cytosine. This Mycolicibacterium smegmatis (strain ATCC 700084 / mc(2)155) (Mycobacterium smegmatis) protein is Lhr helicase/ probable uracil glycosylase.